The chain runs to 516 residues: Methionine--tRNA ligase (516 aa).

Residues 13-23 (FYPNGKPHIGH) carry the 'HIGH' region motif. The 'KMSKS' region signature appears at 299 to 303 (KMSKS). Residue K302 coordinates ATP.

This sequence belongs to the class-I aminoacyl-tRNA synthetase family. MetG type 2B subfamily. Monomer.

Its subcellular location is the cytoplasm. It carries out the reaction tRNA(Met) + L-methionine + ATP = L-methionyl-tRNA(Met) + AMP + diphosphate. Its function is as follows. Is required not only for elongation of protein synthesis but also for the initiation of all mRNA translation through initiator tRNA(fMet) aminoacylation. This chain is Methionine--tRNA ligase, found in Mesorhizobium japonicum (strain LMG 29417 / CECT 9101 / MAFF 303099) (Mesorhizobium loti (strain MAFF 303099)).